Here is a 273-residue protein sequence, read N- to C-terminus: Hydroxynaphthalene reductase arp2 (273 aa).

NADP(+) contacts are provided by isoleucine 24, aspartate 70, asparagine 97, and arginine 130. Active-site proton donor residues include serine 146 and serine 147. Tyrosine 160, lysine 164, valine 193, and serine 195 together coordinate NADP(+). Tyrosine 160 (proton acceptor) is an active-site residue. Residue lysine 164 is the Lowers pKa of active site Tyr of the active site.

The protein belongs to the short-chain dehydrogenases/reductases (SDR) family.

The protein resides in the endosome. Its pathway is pigment biosynthesis; melanin biosynthesis. Its activity is regulated as follows. Tricyclazole and pyroquilon inhibit arp2 hydroxynaphtalene reductase activity. Functionally, hydroxynaphthalene reductase; part of the gene cluster that mediates the biosynthesis of dihydroxynaphthalene (DHN)-melanin, a bluish-green pigment and a structural component of the conidial wall. The first step of the pathway is the production of the heptaketide naphtopyrone YWA1 by the polyketide synthase alb1 though condensation of acetyl-CoA with malonyl-CoA. The naphtopyrone YWA1 is then converted to the pentaketide 1,3,6,8-tetrahydroxynaphthalene (1,3,6,8-THN) by the heptaketide hydrolyase ayg1 though chain-length shortening. 1,3,6,8-THN is substrate of the hydroxynaphthalene reductase arp2 to yield scytalone. The scytalone dehydratase arp1 then reduces scytalone to 1,3,8-THN. 1,3,8-THN is also substrate of the hydroxynaphthalene reductase arp2 to yield vermelone. Vermelone is further converted by the multicopper oxidase abr1 to 1,8-DHN. Finally the laccase abr2 transforms 1,8-DHN to DHN-melanin. DHN-melanin biosynthesis appears to be initiated in endosomes where early enzymes (abl1, ayg1, arp1 and arp2) localize, with exocytosis leading to melanin deposition on the cell surface where late enzymes (abr1 and abr2) localize. DHN-melanin is an important structural component of the outer cell wall and is required for the presence of conidial surface hydrophobins. DHN-melanin also plays a crucial role in fungal virulence, including a protective role against the host's immune defenses. DHN-melanin also protects conidia against amoeba predation. In Aspergillus fumigatus (strain ATCC MYA-4609 / CBS 101355 / FGSC A1100 / Af293) (Neosartorya fumigata), this protein is Hydroxynaphthalene reductase arp2.